The following is a 140-amino-acid chain: Large ribosomal subunit protein uL11 (140 aa).

This sequence belongs to the universal ribosomal protein uL11 family. In terms of assembly, part of the ribosomal stalk of the 50S ribosomal subunit. Interacts with L10 and the large rRNA to form the base of the stalk. L10 forms an elongated spine to which L12 dimers bind in a sequential fashion forming a multimeric L10(L12)X complex. In terms of processing, one or more lysine residues are methylated.

Its function is as follows. Forms part of the ribosomal stalk which helps the ribosome interact with GTP-bound translation factors. The polypeptide is Large ribosomal subunit protein uL11 (Staphylococcus saprophyticus subsp. saprophyticus (strain ATCC 15305 / DSM 20229 / NCIMB 8711 / NCTC 7292 / S-41)).